We begin with the raw amino-acid sequence, 197 residues long: GTP cyclohydrolase-2 (197 aa).

49–53 contacts GTP; that stretch reads RVHSE. Positions 54, 65, and 67 each coordinate Zn(2+). GTP contacts are provided by residues Gln-70, 92–94, and Thr-114; that span reads EGR. Asp-126 (proton acceptor) is an active-site residue. Catalysis depends on Arg-128, which acts as the Nucleophile. 2 residues coordinate GTP: Thr-149 and Lys-154.

Belongs to the GTP cyclohydrolase II family. In terms of assembly, homodimer. It depends on Zn(2+) as a cofactor.

The enzyme catalyses GTP + 4 H2O = 2,5-diamino-6-hydroxy-4-(5-phosphoribosylamino)-pyrimidine + formate + 2 phosphate + 3 H(+). It participates in cofactor biosynthesis; riboflavin biosynthesis; 5-amino-6-(D-ribitylamino)uracil from GTP: step 1/4. Catalyzes the conversion of GTP to 2,5-diamino-6-ribosylamino-4(3H)-pyrimidinone 5'-phosphate (DARP), formate and pyrophosphate. The protein is GTP cyclohydrolase-2 of Pectobacterium atrosepticum (strain SCRI 1043 / ATCC BAA-672) (Erwinia carotovora subsp. atroseptica).